Here is a 125-residue protein sequence, read N- to C-terminus: Small ribosomal subunit protein eS8 (125 aa).

The protein belongs to the eukaryotic ribosomal protein eS8 family. In terms of assembly, part of the 30S ribosomal subunit.

This Methanocorpusculum labreanum (strain ATCC 43576 / DSM 4855 / Z) protein is Small ribosomal subunit protein eS8.